The chain runs to 292 residues: Glyoxylase B2 (292 aa).

His-72, His-74, Asp-76, His-77, His-148, and Asp-166 together coordinate Zn(2+). Residues 175-181 (TARCDFP), 208-210 (HDY), and 284-287 (KIPL) contribute to the substrate site. His-208 is a Zn(2+) binding site.

It belongs to the metallo-beta-lactamase superfamily. Glyoxalase II family. Zn(2+) serves as cofactor.

This chain is Glyoxylase B2 (gloB2), found in Dictyostelium discoideum (Social amoeba).